The following is a 426-amino-acid chain: DNA polymerase processivity factor component OPG148 (426 aa).

The protein belongs to the orthopoxvirus OPG148 family. Interacts with the DNA polymerase catalytic subunit OPG071. Interacts with UDG/OPG116. Component of the uracil-DNA glycosylase(UDG)-OPG148-polymerase complex; OPG148 and UDG form a heterodimeric processivity factor that associates with OPG071 to form the processive polymerase holoenzyme. Interacts with OPG117.

Its function is as follows. Plays an essential role in viral DNA replication by acting as the polymerase processivity factor together with protein OPG116. Serves as a bridge which links the DNA polymerase OPG071 and the uracil DNA glycosylase. This Vaccinia virus (strain Copenhagen) (VACV) protein is DNA polymerase processivity factor component OPG148 (OPG148).